The primary structure comprises 204 residues: UPF0637 protein lmo1065 (204 aa).

Belongs to the UPF0637 family.

This chain is UPF0637 protein lmo1065, found in Listeria monocytogenes serovar 1/2a (strain ATCC BAA-679 / EGD-e).